The following is a 185-amino-acid chain: Large ribosomal subunit protein uL5 (185 aa).

It belongs to the universal ribosomal protein uL5 family. Part of the 50S ribosomal subunit; part of the 5S rRNA/L5/L18/L25 subcomplex. Contacts the 5S rRNA and the P site tRNA. Forms a bridge to the 30S subunit in the 70S ribosome.

Functionally, this is one of the proteins that bind and probably mediate the attachment of the 5S RNA into the large ribosomal subunit, where it forms part of the central protuberance. In the 70S ribosome it contacts protein S13 of the 30S subunit (bridge B1b), connecting the 2 subunits; this bridge is implicated in subunit movement. Contacts the P site tRNA; the 5S rRNA and some of its associated proteins might help stabilize positioning of ribosome-bound tRNAs. This chain is Large ribosomal subunit protein uL5, found in Bradyrhizobium diazoefficiens (strain JCM 10833 / BCRC 13528 / IAM 13628 / NBRC 14792 / USDA 110).